A 242-amino-acid polypeptide reads, in one-letter code: Universal stress protein PHOS32 (242 aa).

A chloroplast-targeting transit peptide spans 1–43 (MNPADSDHPQLPNIKIHHPPSPRHSHHHHSSSTPSSAATPTPT). Residues 1–45 (MNPADSDHPQLPNIKIHHPPSPRHSHHHHSSSTPSSAATPTPTAG) are disordered. Residues 15–30 (KIHHPPSPRHSHHHHS) are compositionally biased toward basic residues. P19 is a binding site for ATP. Residue S21 is modified to Phosphoserine; by MAPK3 and MAPK6. Residues 31–44 (SSTPSSAATPTPTA) are compositionally biased toward low complexity. ATP contacts are provided by residues V83, 168–178 (GSRGFGAEKKR), and 186–188 (SVS). S219 is modified (phosphoserine).

This sequence belongs to the universal stress protein A family. Post-translationally, phosphorylated by MAPK3 and MAPK6 after pathogenic elicitation (e.g. bacterial flg22, Phytophthora infestans zoospores and xylanase).

The protein resides in the plastid. It is found in the chloroplast. In Arabidopsis thaliana (Mouse-ear cress), this protein is Universal stress protein PHOS32.